The chain runs to 424 residues: UPF0597 protein Shewana3_2972 (424 aa).

Belongs to the UPF0597 family.

This is UPF0597 protein Shewana3_2972 from Shewanella sp. (strain ANA-3).